Reading from the N-terminus, the 103-residue chain is Large ribosomal subunit protein bL21 (103 aa).

It belongs to the bacterial ribosomal protein bL21 family. Part of the 50S ribosomal subunit. Contacts protein L20.

Functionally, this protein binds to 23S rRNA in the presence of protein L20. The sequence is that of Large ribosomal subunit protein bL21 from Methylococcus capsulatus (strain ATCC 33009 / NCIMB 11132 / Bath).